Reading from the N-terminus, the 1294-residue chain is Ethylene-insensitive protein 2 (1294 aa).

Residues 1–12 (MEAEIVNVRPQL) lie on the Cytoplasmic side of the membrane. Residues 13–33 (GFIQRMVPALLPVLLVSVGYI) form a helical membrane-spanning segment. Residues 34–50 (DPGKWVANIEGGARFGY) lie on the Extracellular side of the membrane. The helical transmembrane segment at 51 to 71 (DLVAITLLFNFAAILCQYVAA) threads the bilayer. The Cytoplasmic segment spans residues 72–105 (RISVVTGKHLAQICNEEYDKWTCMFLGIQAEFSA). The chain crosses the membrane as a helical span at residues 106-126 (ILLDLTMVVGVAHALNLLFGV). Residue glutamate 127 is a topological domain, extracellular. The helical transmembrane segment at 128–148 (LSTGVFLAAMDAFLFPVFASF) threads the bilayer. Topologically, residues 149–155 (LENGMAN) are cytoplasmic. Residues 156 to 176 (TVSIYSAGLVLLLYVSGVLLS) form a helical membrane-spanning segment. Residues 177 to 194 (QSEIPLSMNGVLTRLNGE) lie on the Extracellular side of the membrane. Residues 195-215 (SAFALMGLLGASIVPHNFYIH) traverse the membrane as a helical segment. At 216-237 (SYFAGESTSSSDVDKSSLCQDH) the chain is on the cytoplasmic side. Residues 238 to 258 (LFAIFGVFSGLSLVNYVLMNA) traverse the membrane as a helical segment. Topologically, residues 259–287 (AANVFHSTGLVVLTFHDALSLMEQVFMSP) are extracellular. The chain crosses the membrane as a helical span at residues 288–308 (LIPVVFLMLLFFSSQITALAW). The Cytoplasmic segment spans residues 309-334 (AFGGEVVLHDFLKIEIPAWLHRATIR). 2 helical membrane-spanning segments follow: residues 335-355 (ILAVAPALYCVWTSGADGIYQ) and 356-376 (LLIFTQVLVAMMLPCSVIPLF). Over 377-397 (RIASSRQIMGVHKIPQVGEFL) the chain is Cytoplasmic. Residues 398–418 (ALTTFLGFLGLNVVFVVEMVF) form a helical membrane-spanning segment. Residues 419–440 (GSSDWAGGLRWNTVMGTSIQYT) lie on the Extracellular side of the membrane. A helical transmembrane segment spans residues 441–461 (TLLVSSCASLCLILWLAATPL). Residues 462 to 1294 (KSASNRAEAQ…KNVTAYGSLG (833 aa)) are Cytoplasmic-facing. Disordered regions lie at residues 534-561 (TDQEIRSSPPEERELDVKYSTSQVSSLK) and 623-662 (ETEEATKAAPTSNFTVGSDGPPSFRSLSGEGGSGTGSLSR). Over residues 536–550 (QEIRSSPPEERELDV) the composition is skewed to basic and acidic residues. Residues serine 645, serine 659, and serine 757 each carry the phosphoserine modification. Threonine 819 carries the post-translational modification Phosphothreonine. Position 924 is a phosphoserine (serine 924). The Nuclear localization signal motif lies at 1262 to 1269 (LKRYKRRL). The tract at residues 1269-1294 (LSNKPVGMNQDGPGSRKNVTAYGSLG) is disordered. At serine 1283 the chain carries Phosphoserine.

It belongs to the NRAMP (TC 2.A.55) family. Interacts (via NLS) with ETR1. Interacts (via C-terminus) with EER5 and the COP9 signalosome subunits CSN3, CSN6A and CSN6B. Interacts with ETP1 and ETP2. Interacts with CTR1. Interacts with all members of the ethylene receptor family, including ETR1, ETR2, ERS1, ERS2 and EIN4. Binds to MRF3/ECIP1. In terms of assembly, interacts with several P-body components, such as XRN4/EIN5, PAB2, PAB4 and PAB8. Binds to ENAP1 in the presence of ethylene; this reaction facilitates its association with histone. Post-translationally, phosphorylated by CTR1 on at least 4 sites. Phosphorylation of Ser-645 and Ser-924 is involved in repressing EIN2 signaling. Loss of phosphorylation results in nuclear localization of the C-terminus of EIN2. In terms of tissue distribution, localized to the guard cells after methyl jasmonate treatment.

It is found in the endoplasmic reticulum membrane. It localises to the nucleus. The protein resides in the cytoplasm. In terms of biological role, central factor in signaling pathways regulated by ethylene (ET) and involved in various processes including development, plant defense, senescence, nucleotide sugar flux, and tropisms. Necessary for ethylene-mediated gene regulation, and for the induction of some genes by ozone. Acts downstream of ET receptors, and upstream of ethylene regulated transcription factors. Required for cytokinin-mediated processes. Seems to be implicated in cross-talk between ET, jasmonate and other pathways. Probably not involved in iron uptake. Has a short half-life and undergoes rapid proteasome-mediated turnover in the absence of ethylene. Required for ethylene-induced EIN3 stabilization via proteasomal degradation of EBF1/EBF2 proteins. Regulates the leaf senescence induced by methyl jasmonate, ethylene and abscisic acid. Required during salt stress to confer resistance. Trafficking signal inducing ethylene response. The nuclear localization is both necessary and sufficient to activate EIN3-mediated transcription and ethylene responses. Involved in ethylene (ET)-mediated signaling pathways by triggering histone acetylation of H3K14 and H3K23 in an ENAP1-dependent manner, thus influencing the expression of ethylene-responsive genes. Necessary and sufficient for 3'-UTR-mediated translational repression of EBF1 and EBF2 mRNAs. Ethylene induces EIN2-CEND to associate with 3' UTRs in cytoplasmic foci and target EBF1/2 mRNAs to cytoplasmic processing-body (P-body). MPK6 regulates the cleavage and nuclear translocation of EIN2-CEND under methyl jasmonate treatment. Required for EIN3 accumulation. The protein is Ethylene-insensitive protein 2 of Arabidopsis thaliana (Mouse-ear cress).